The sequence spans 287 residues: Nuclease S1 (287 aa).

A signal peptide spans 1 to 20; it reads MPRLLPISAATLALAQLTYG. Trp21, His26, Asp65, and His80 together coordinate a divalent metal cation. Substrate contacts are provided by residues 21–26, 65–71, 80–83, and 93–98; these read WGNLGH, DTYKYTD, HFID, and GVDYDR. Intrachain disulfides connect Cys92-Cys236 and Cys100-Cys105. 2 N-linked (GlcNAc...) asparagine glycosylation sites follow: Asn112 and Asn122. Positions 135, 139, 145, 168, and 172 each coordinate a divalent metal cation. Residues 135-183 are substrate binding; it reads HIIGDIHQPLHDENLEAGGNGIDVTYDGETTNLHHIWDTNMPEEAAGGY. A glycan (N-linked (GlcNAc...) asparagine) is linked at Asn248.

It belongs to the nuclease type I family. Monomer. Zn(2+) serves as cofactor.

It catalyses the reaction Endonucleolytic cleavage to 5'-phosphomononucleotide and 5'-phosphooligonucleotide end-products.. Its activity is regulated as follows. Inhibited by inorganic phosphate (Pi). Functionally, hydrolyzes only single-stranded DNA and RNA without apparent specificity for bases. The polypeptide is Nuclease S1 (Aspergillus oryzae (strain ATCC 42149 / RIB 40) (Yellow koji mold)).